A 287-amino-acid polypeptide reads, in one-letter code: Co-chaperone protein DjlA (287 aa).

Residues 1 to 6 (MQIFGK) are Periplasmic-facing. Residues 7–30 (ILGAFFGFLFGGVFGALFGLFIGH) form a helical membrane-spanning segment. Topologically, residues 31-287 (QFDKARRLSQ…DLIKKEKGFK (257 aa)) are cytoplasmic. A disordered region spans residues 192 to 213 (GGFGGQQHQSHHSSSHGGWQQA). One can recognise a J domain in the interval 221 to 287 (DAYKILGIDA…DLIKKEKGFK (67 aa)).

Homodimer.

The protein resides in the cell inner membrane. Its function is as follows. Regulatory DnaK co-chaperone. Direct interaction between DnaK and DjlA is needed for the induction of the wcaABCDE operon, involved in the synthesis of a colanic acid polysaccharide capsule, possibly through activation of the RcsB/RcsC phosphotransfer signaling pathway. The colanic acid capsule may help the bacterium survive conditions outside the host. In Vibrio vulnificus (strain CMCP6), this protein is Co-chaperone protein DjlA.